The following is a 199-amino-acid chain: Recombination protein RecR (199 aa).

A C4-type zinc finger spans residues 58–73; sequence CKICFNITDKEVCDIC. The 96-residue stretch at 81-176 folds into the Toprim domain; the sequence is STICVVSHPM…KVTRIAHGIP (96 aa).

The protein belongs to the RecR family.

May play a role in DNA repair. It seems to be involved in an RecBC-independent recombinational process of DNA repair. It may act with RecF and RecO. This Caldanaerobacter subterraneus subsp. tengcongensis (strain DSM 15242 / JCM 11007 / NBRC 100824 / MB4) (Thermoanaerobacter tengcongensis) protein is Recombination protein RecR.